Here is a 327-residue protein sequence, read N- to C-terminus: Ferrochelatase (327 aa).

The Fe cation site is built by histidine 187 and glutamate 265.

This sequence belongs to the ferrochelatase family.

The protein localises to the cytoplasm. It catalyses the reaction heme b + 2 H(+) = protoporphyrin IX + Fe(2+). The protein operates within porphyrin-containing compound metabolism; protoheme biosynthesis; protoheme from protoporphyrin-IX: step 1/1. Functionally, catalyzes the ferrous insertion into protoporphyrin IX. This chain is Ferrochelatase, found in Chlamydia pneumoniae (Chlamydophila pneumoniae).